Reading from the N-terminus, the 97-residue chain is Co-chaperonin GroES (97 aa).

Belongs to the GroES chaperonin family. Heptamer of 7 subunits arranged in a ring. Interacts with the chaperonin GroEL.

Its subcellular location is the cytoplasm. Together with the chaperonin GroEL, plays an essential role in assisting protein folding. The GroEL-GroES system forms a nano-cage that allows encapsulation of the non-native substrate proteins and provides a physical environment optimized to promote and accelerate protein folding. GroES binds to the apical surface of the GroEL ring, thereby capping the opening of the GroEL channel. The chain is Co-chaperonin GroES from Serratia proteamaculans (strain 568).